The primary structure comprises 260 residues: 3'-5' ssDNA/RNA exonuclease TatD (260 aa).

A divalent metal cation is bound by residues E92, H128, and H153.

This sequence belongs to the metallo-dependent hydrolases superfamily. TatD-type hydrolase family. TatD subfamily. In terms of assembly, monomer. Requires Mg(2+) as cofactor.

The protein resides in the cytoplasm. Its function is as follows. 3'-5' exonuclease that prefers single-stranded DNA and RNA. May play a role in the H(2)O(2)-induced DNA damage repair. The polypeptide is 3'-5' ssDNA/RNA exonuclease TatD (Pectobacterium atrosepticum (strain SCRI 1043 / ATCC BAA-672) (Erwinia carotovora subsp. atroseptica)).